The chain runs to 217 residues: Thymidylate kinase (217 aa).

An ATP-binding site is contributed by G7 to S14.

The protein belongs to the thymidylate kinase family.

It catalyses the reaction dTMP + ATP = dTDP + ADP. Functionally, phosphorylation of dTMP to form dTDP in both de novo and salvage pathways of dTTP synthesis. In Desulfovibrio desulfuricans (strain ATCC 27774 / DSM 6949 / MB), this protein is Thymidylate kinase.